A 134-amino-acid chain; its full sequence is MDPVIIAFCCYQUGYGAADLAGTSRMQYPATVRIVRLPCTGKFDITYALRAFQKGADAVMVVGUKKGECAYETGNLKAEERVRFAKQLLDELGIGGDRIDMFFMSAAEADKFVSAVNEMTARVEKLGPNPLKAQ.

Non-standard amino acids (selenocysteine) are located at Sec13 and Sec64.

This sequence belongs to the MvhD/VhuD family. As to quaternary structure, the F420-non-reducing hydrogenase vhu is composed of four subunits; VhuA, VhuD, VhuG and VhuU. It depends on [2Fe-2S] cluster as a cofactor.

The sequence is that of F420-non-reducing hydrogenase vhu iron-sulfur subunit D (vhuD) from Methanocaldococcus jannaschii (strain ATCC 43067 / DSM 2661 / JAL-1 / JCM 10045 / NBRC 100440) (Methanococcus jannaschii).